The following is a 230-amino-acid chain: Flagellar L-ring protein (230 aa).

The N-terminal stretch at M1–A15 is a signal peptide. A lipid anchor (N-palmitoyl cysteine) is attached at C16. C16 carries the S-diacylglycerol cysteine lipid modification.

It belongs to the FlgH family. In terms of assembly, the basal body constitutes a major portion of the flagellar organelle and consists of four rings (L,P,S, and M) mounted on a central rod.

Its subcellular location is the cell outer membrane. It localises to the bacterial flagellum basal body. Assembles around the rod to form the L-ring and probably protects the motor/basal body from shearing forces during rotation. This is Flagellar L-ring protein from Xanthomonas campestris pv. campestris (strain 8004).